The following is a 425-amino-acid chain: Serine hydroxymethyltransferase (425 aa).

(6S)-5,6,7,8-tetrahydrofolate contacts are provided by residues Leu128 and Gly132–Leu134. N6-(pyridoxal phosphate)lysine is present on Lys237.

The protein belongs to the SHMT family. In terms of assembly, homodimer. Requires pyridoxal 5'-phosphate as cofactor.

The protein localises to the cytoplasm. It catalyses the reaction (6R)-5,10-methylene-5,6,7,8-tetrahydrofolate + glycine + H2O = (6S)-5,6,7,8-tetrahydrofolate + L-serine. It functions in the pathway one-carbon metabolism; tetrahydrofolate interconversion. The protein operates within amino-acid biosynthesis; glycine biosynthesis; glycine from L-serine: step 1/1. Functionally, catalyzes the reversible interconversion of serine and glycine with tetrahydrofolate (THF) serving as the one-carbon carrier. This reaction serves as the major source of one-carbon groups required for the biosynthesis of purines, thymidylate, methionine, and other important biomolecules. Also exhibits THF-independent aldolase activity toward beta-hydroxyamino acids, producing glycine and aldehydes, via a retro-aldol mechanism. The sequence is that of Serine hydroxymethyltransferase from Wolbachia pipientis subsp. Culex pipiens (strain wPip).